Reading from the N-terminus, the 208-residue chain is 3-demethoxyubiquinol 3-hydroxylase (208 aa).

The Fe cation site is built by glutamate 57, glutamate 87, histidine 90, glutamate 139, glutamate 171, and histidine 174.

This sequence belongs to the COQ7 family. The cofactor is Fe cation.

The protein resides in the cell membrane. It carries out the reaction a 5-methoxy-2-methyl-3-(all-trans-polyprenyl)benzene-1,4-diol + AH2 + O2 = a 3-demethylubiquinol + A + H2O. The protein operates within cofactor biosynthesis; ubiquinone biosynthesis. In terms of biological role, catalyzes the hydroxylation of 2-nonaprenyl-3-methyl-6-methoxy-1,4-benzoquinol during ubiquinone biosynthesis. In Burkholderia mallei (strain NCTC 10229), this protein is 3-demethoxyubiquinol 3-hydroxylase.